Reading from the N-terminus, the 312-residue chain is Porphobilinogen deaminase (312 aa).

Position 241 is an S-(dipyrrolylmethanemethyl)cysteine (Cys-241).

It belongs to the HMBS family. Monomer. Requires dipyrromethane as cofactor.

It carries out the reaction 4 porphobilinogen + H2O = hydroxymethylbilane + 4 NH4(+). Its pathway is porphyrin-containing compound metabolism; protoporphyrin-IX biosynthesis; coproporphyrinogen-III from 5-aminolevulinate: step 2/4. Functionally, tetrapolymerization of the monopyrrole PBG into the hydroxymethylbilane pre-uroporphyrinogen in several discrete steps. The polypeptide is Porphobilinogen deaminase (Trichlorobacter lovleyi (strain ATCC BAA-1151 / DSM 17278 / SZ) (Geobacter lovleyi)).